We begin with the raw amino-acid sequence, 173 residues long: uncharacterized protein (173 aa).

This is an uncharacterized protein from Haemophilus influenzae (strain ATCC 51907 / DSM 11121 / KW20 / Rd).